The following is a 462-amino-acid chain: Probable DNA-directed RNA polymerase subunit 343L (462 aa).

The protein belongs to the RNA polymerase beta' chain family.

It catalyses the reaction RNA(n) + a ribonucleoside 5'-triphosphate = RNA(n+1) + diphosphate. Functionally, component of the DNA-dependent RNA polymerase that catalyzes the transcription in the cytoplasm of viral DNA into RNA using the four ribonucleoside triphosphates as substrates. This Acheta domesticus (House cricket) protein is Probable DNA-directed RNA polymerase subunit 343L.